A 667-amino-acid chain; its full sequence is Cysteine-rich receptor-like protein kinase 11 (667 aa).

The N-terminal stretch at 1 to 24 (MKQRSLFSVLCFFFISFGVASVSA) is a signal peptide. Gnk2-homologous domains follow at residues 25 to 129 (QTCT…NTSF) and 135 to 248 (LNPR…LYTY). Over 25-292 (QTCTTDKGTF…SKGISAGVVV (268 aa)) the chain is Extracellular. 7 N-linked (GlcNAc...) asparagine glycosylation sites follow: Asn37, Asn54, Asn64, Asn106, Asn126, Asn150, and Asn254. The span at 259–268 (SPPPEPPVTV) shows a compositional bias: pro residues. Residues 259–282 (SPPPEPPVTVPQPAGDQDNPTNND) are disordered. N-linked (GlcNAc...) asparagine glycosylation occurs at Asn281. The chain crosses the membrane as a helical span at residues 293 to 313 (AITVPTVIAILILLVLGFVLF). Topologically, residues 314-667 (RRRKSYQRTK…YTSKSSSFSS (354 aa)) are cytoplasmic. Positions 350–629 (FSTSNKLGEG…IILMLTSNTI (280 aa)) constitute a Protein kinase domain. Residues 356–364 (LGEGGFGAV) and Lys378 each bind ATP. A Phosphotyrosine modification is found at Tyr423. Asp475 (proton acceptor) is an active-site residue. Position 479 is a phosphoserine (Ser479). Thr515 bears the Phosphothreonine mark. Phosphotyrosine is present on Tyr523.

The protein belongs to the protein kinase superfamily. Ser/Thr protein kinase family. CRK subfamily. As to expression, detected in root, stem, leaf and flower.

It localises to the membrane. It catalyses the reaction L-seryl-[protein] + ATP = O-phospho-L-seryl-[protein] + ADP + H(+). It carries out the reaction L-threonyl-[protein] + ATP = O-phospho-L-threonyl-[protein] + ADP + H(+). This is Cysteine-rich receptor-like protein kinase 11 (CRK11) from Arabidopsis thaliana (Mouse-ear cress).